The chain runs to 153 residues: Arginine repressor (153 aa).

The protein belongs to the ArgR family.

It localises to the cytoplasm. It functions in the pathway amino-acid biosynthesis; L-arginine biosynthesis [regulation]. Regulates arginine biosynthesis genes. This is Arginine repressor from Actinobacillus pleuropneumoniae serotype 7 (strain AP76).